The following is a 138-amino-acid chain: Translation initiation factor 2 subunit beta (138 aa).

Belongs to the eIF-2-beta/eIF-5 family. Heterotrimer composed of an alpha, a beta and a gamma chain.

Functionally, eIF-2 functions in the early steps of protein synthesis by forming a ternary complex with GTP and initiator tRNA. The protein is Translation initiation factor 2 subunit beta of Methanococcus maripaludis (strain C6 / ATCC BAA-1332).